Here is a 224-residue protein sequence, read N- to C-terminus: ATP-dependent dethiobiotin synthetase BioD (224 aa).

An ATP-binding site is contributed by 12–17; sequence GVGKTF. Residue Thr16 coordinates Mg(2+). The active site involves Lys37. Thr41 lines the substrate pocket. Residues Asn52, 107 to 110, 167 to 168, 197 to 199, and Glu204 each bind ATP; these read EGAG, GS, and PEG. Positions 52 and 107 each coordinate Mg(2+).

This sequence belongs to the dethiobiotin synthetase family. In terms of assembly, homodimer. It depends on Mg(2+) as a cofactor.

It is found in the cytoplasm. The catalysed reaction is (7R,8S)-7,8-diammoniononanoate + CO2 + ATP = (4R,5S)-dethiobiotin + ADP + phosphate + 3 H(+). The protein operates within cofactor biosynthesis; biotin biosynthesis; biotin from 7,8-diaminononanoate: step 1/2. Catalyzes a mechanistically unusual reaction, the ATP-dependent insertion of CO2 between the N7 and N8 nitrogen atoms of 7,8-diaminopelargonic acid (DAPA, also called 7,8-diammoniononanoate) to form a ureido ring. This Corynebacterium glutamicum (strain ATCC 13032 / DSM 20300 / JCM 1318 / BCRC 11384 / CCUG 27702 / LMG 3730 / NBRC 12168 / NCIMB 10025 / NRRL B-2784 / 534) protein is ATP-dependent dethiobiotin synthetase BioD.